Here is a 64-residue protein sequence, read N- to C-terminus: Prokaryotic ubiquitin-like protein Pup (64 aa).

The segment at 20-58 (QELTLAASHVVSDVSEVDDLLDEIDGLLAENAEDFVTGF) is ARC ATPase binding. E64 participates in a covalent cross-link: Isoglutamyl lysine isopeptide (Glu-Lys) (interchain with K-? in acceptor proteins).

Belongs to the prokaryotic ubiquitin-like protein family. As to quaternary structure, strongly interacts with the proteasome-associated ATPase ARC through a hydrophobic interface; the interacting region of Pup lies in its C-terminal half. There is one Pup binding site per ARC hexamer ring.

The protein operates within protein degradation; proteasomal Pup-dependent pathway. In terms of biological role, protein modifier that is covalently attached to lysine residues of substrate proteins, thereby targeting them for proteasomal degradation. The tagging system is termed pupylation. The polypeptide is Prokaryotic ubiquitin-like protein Pup (Rothia mucilaginosa (strain DY-18) (Stomatococcus mucilaginosus)).